A 399-amino-acid polypeptide reads, in one-letter code: Peroxisome assembly protein 12 (399 aa).

The interval 1 to 24 (MSFYSNLPSAGQSSRGSSTSGRNG) is disordered. The Peroxisomal matrix segment spans residues 1-33 (MSFYSNLPSAGQSSRGSSTSGRNGVGLEPLYPT). The segment covering 9–24 (SAGQSSRGSSTSGRNG) has biased composition (low complexity). Residues 34–62 (IFEIMSSQEIDSLLPASIRYLLANHLVAN) form a helical membrane-spanning segment. Over 63-67 (FPNRY) the chain is Cytoplasmic. The helical transmembrane segment at 68-92 (TLRLNKYFFEWFQAIKGFVEWYHLK) threads the bilayer. The Peroxisomal matrix portion of the chain corresponds to 93–136 (TYNSTFIDRFYGLQLFSSRDRNLALTQCLNPKGQSEWPQGLQLN). Residues 137-168 (QQQKSVIFLEKIILPYITAKLDEILEKISMNN) form a helical membrane-spanning segment. Residues 169-171 (IFS) lie on the Cytoplasmic side of the membrane. A helical transmembrane segment spans residues 172-208 (SDETENKWPKRAFLRIYPFIKKLLALSNLLVKLLFLT). Residues 209–277 (KRTGSVSLLQ…PRFLTFMGSQ (69 aa)) are Peroxisomal matrix-facing. Residues 278–305 (FFPTFIFVLRVYQWWTTQDMTTKLQKRV) traverse the membrane as a helical segment. Over 306 to 399 (NDLDEDIPRP…VVTGIRKLLI (94 aa)) the chain is Cytoplasmic. Zn(2+) contacts are provided by C334, C337, C354, and C357. An RING-type; degenerate zinc finger spans residues 334 to 373 (CPVCEKTVQNPCVLETGYVACYPCAISYLVNNEGHCPVTN).

The protein belongs to the pex2/pex10/pex12 family. In terms of assembly, component of the PEX2-PEX10-PEX12 retrotranslocation channel, composed of PEX2, PEX10 and PEX12.

Its subcellular location is the peroxisome membrane. It participates in protein modification; protein ubiquitination. Its function is as follows. Component of a retrotranslocation channel required for peroxisome organization by mediating export of the PEX5 receptor from peroxisomes to the cytosol, thereby promoting PEX5 recycling. The retrotranslocation channel is composed of PEX2, PEX10 and PEX12; each subunit contributing transmembrane segments that coassemble into an open channel that specifically allows the passage of PEX5 through the peroxisomal membrane. PEX12 also regulates PEX5 recycling by activating the E3 ubiquitin-protein ligase activity of PEX10. When PEX5 recycling is compromised, PEX12 stimulates PEX10-mediated polyubiquitination of PEX5, leading to its subsequent degradation. This is Peroxisome assembly protein 12 from Saccharomyces cerevisiae (strain ATCC 204508 / S288c) (Baker's yeast).